The sequence spans 339 residues: Cyclin-Y-like protein 1-A (339 aa).

Polar residues predominate over residues 1-13 (MGNTVTCCVSPDS). The disordered stretch occupies residues 1 to 42 (MGNTVTCCVSPDSSPKEGRDREVTESGEPYQAQGEPQDGDVQ). Residues 14 to 24 (SPKEGRDREVT) are compositionally biased toward basic and acidic residues. Residues 141 to 263 (DIFDEKLHPI…FLELLQFNIN (123 aa)) form the Cyclin N-terminal domain.

The protein belongs to the cyclin family. Cyclin Y subfamily.

The chain is Cyclin-Y-like protein 1-A (ccnyl1-a) from Xenopus laevis (African clawed frog).